Consider the following 260-residue polypeptide: Adenosylcobinamide-GDP ribazoletransferase (260 aa).

A run of 7 helical transmembrane segments spans residues Pro42–Ile62, Leu64–Leu84, Phe117–Ile137, Tyr144–Trp164, Gly192–Ile212, Ala214–Gly234, and Thr240–Leu260.

The protein belongs to the CobS family. Mg(2+) is required as a cofactor.

The protein resides in the cell inner membrane. It catalyses the reaction alpha-ribazole + adenosylcob(III)inamide-GDP = adenosylcob(III)alamin + GMP + H(+). The catalysed reaction is alpha-ribazole 5'-phosphate + adenosylcob(III)inamide-GDP = adenosylcob(III)alamin 5'-phosphate + GMP + H(+). The protein operates within cofactor biosynthesis; adenosylcobalamin biosynthesis; adenosylcobalamin from cob(II)yrinate a,c-diamide: step 7/7. In terms of biological role, joins adenosylcobinamide-GDP and alpha-ribazole to generate adenosylcobalamin (Ado-cobalamin). Also synthesizes adenosylcobalamin 5'-phosphate from adenosylcobinamide-GDP and alpha-ribazole 5'-phosphate. This Brucella melitensis biotype 1 (strain ATCC 23456 / CCUG 17765 / NCTC 10094 / 16M) protein is Adenosylcobinamide-GDP ribazoletransferase.